Here is a 349-residue protein sequence, read N- to C-terminus: Serine/threonine-protein kinase SRK2A (349 aa).

The Protein kinase domain maps to 12-268 (YELVKDIGSG…IQEIKNHEWF (257 aa)). ATP contacts are provided by residues 18–26 (IGSGNFGVA) and Lys-41. The active-site Proton acceptor is Asp-131. Positions 151–177 (DFGYSKSSLLHSQPKSTVGTPAYIAPE) are activation loop.

It belongs to the protein kinase superfamily. Ser/Thr protein kinase family.

It catalyses the reaction L-seryl-[protein] + ATP = O-phospho-L-seryl-[protein] + ADP + H(+). It carries out the reaction L-threonyl-[protein] + ATP = O-phospho-L-threonyl-[protein] + ADP + H(+). Its activity is regulated as follows. Activated by osmotic stress and by abscisic acid (ABA). Activation by NaCl is dependent on ABA. Functionally, involved in early responses to osmotic stress. In Physcomitrium patens (Spreading-leaved earth moss), this protein is Serine/threonine-protein kinase SRK2A.